Here is a 248-residue protein sequence, read N- to C-terminus: 4-hydroxy-tetrahydrodipicolinate reductase (248 aa).

NAD(+) is bound by residues Gly-9–Val-14, Gly-77–Thr-79, and Ala-104–Phe-107. His-134 functions as the Proton donor/acceptor in the catalytic mechanism. His-135 contributes to the (S)-2,3,4,5-tetrahydrodipicolinate binding site. Residue Lys-138 is the Proton donor of the active site. (S)-2,3,4,5-tetrahydrodipicolinate is bound at residue Gly-144 to Thr-145.

It belongs to the DapB family.

It localises to the cytoplasm. The enzyme catalyses (S)-2,3,4,5-tetrahydrodipicolinate + NAD(+) + H2O = (2S,4S)-4-hydroxy-2,3,4,5-tetrahydrodipicolinate + NADH + H(+). It carries out the reaction (S)-2,3,4,5-tetrahydrodipicolinate + NADP(+) + H2O = (2S,4S)-4-hydroxy-2,3,4,5-tetrahydrodipicolinate + NADPH + H(+). It participates in amino-acid biosynthesis; L-lysine biosynthesis via DAP pathway; (S)-tetrahydrodipicolinate from L-aspartate: step 4/4. Catalyzes the conversion of 4-hydroxy-tetrahydrodipicolinate (HTPA) to tetrahydrodipicolinate. This chain is 4-hydroxy-tetrahydrodipicolinate reductase, found in Corynebacterium efficiens (strain DSM 44549 / YS-314 / AJ 12310 / JCM 11189 / NBRC 100395).